The sequence spans 1915 residues: Cysteine repeat modular protein 2 (1915 aa).

The first 23 residues, 1–23 (MKFKKELINILALIFVLKKNIFA), serve as a signal peptide directing secretion. 5 FU repeats span residues 53–98 (LGLC…QTYV), 104–151 (SCIC…GYTQ), 161–208 (QLLC…LQYK), 210–263 (NGIC…GYVV), and 267–315 (TQRC…GNYQ). N-linked (GlcNAc...) asparagine glycosylation occurs at Asn138. N-linked (GlcNAc...) asparagine glycosylation is found at Asn274, Asn279, and Asn316. FU repeat units lie at residues 317 to 362 (SSLC…GFYT), 373 to 422 (QPIC…QTYY), 427 to 492 (TRSC…GFYQ), 496 to 546 (NNSC…SQNN), and 554 to 602 (TQAC…GTYM). N-linked (GlcNAc...) asparagine glycosylation is present at Asn409. Residues Asn496, Asn572, Asn603, and Asn621 are each glycosylated (N-linked (GlcNAc...) asparagine). 3 FU repeats span residues 606 to 639 (TNQCSLCGFGCSSCTNGTFNSCISCLNGYYLQQN), 640 to 686 (YNVC…GFYV), and 690 to 739 (QQAC…NECL). Residue Asn742 is glycosylated (N-linked (GlcNAc...) asparagine). FU repeat units lie at residues 760–814 (DGQC…GFYY) and 818–865 (NKQC…GYYQ). Residues Asn909, Asn930, Asn1051, Asn1085, and Asn1193 are each glycosylated (N-linked (GlcNAc...) asparagine). An EGF-like domain is found at 1184 to 1224 (VQIPCDSNINCSGNGKCLWSQDNYNEILCICNINYAGRYCE). Intrachain disulfides connect Cys1188–Cys1200, Cys1194–Cys1212, and Cys1214–Cys1223. 7 N-linked (GlcNAc...) asparagine glycosylation sites follow: Asn1250, Asn1297, Asn1519, Asn1546, Asn1554, Asn1580, and Asn1596. A run of 5 helical transmembrane segments spans residues 1599–1619 (LLYALLIYIIFITIFIVISII), 1662–1682 (YAQLIINLFLYNAIFVLVYSL), 1704–1724 (STSVACSIVTYYLTICMVNLF), 1763–1783 (GLVFMLQAGMGIPIIILILSF), and 1796–1816 (FASFVIDNILDIIILISFCFI). The N-linked (GlcNAc...) asparagine glycan is linked to Asn1867.

The protein localises to the membrane. Functionally, required for mucocyst secretion. This chain is Cysteine repeat modular protein 2, found in Tetrahymena thermophila (strain SB210).